The sequence spans 298 residues: Protoheme IX farnesyltransferase (298 aa).

8 helical membrane passes run 16 to 36, 45 to 65, 97 to 117, 141 to 161, 172 to 192, 223 to 243, 244 to 264, and 277 to 297; these read VVAL…PGMP, ALGF…NQLL, VLIV…TAVL, IVIG…AVTG, SLLV…LAIF, VLLA…VFYL, GGAV…LDPP, and VVYL…LPWV.

Belongs to the UbiA prenyltransferase family. Protoheme IX farnesyltransferase subfamily.

It is found in the cell inner membrane. The enzyme catalyses heme b + (2E,6E)-farnesyl diphosphate + H2O = Fe(II)-heme o + diphosphate. It functions in the pathway porphyrin-containing compound metabolism; heme O biosynthesis; heme O from protoheme: step 1/1. Functionally, converts heme B (protoheme IX) to heme O by substitution of the vinyl group on carbon 2 of heme B porphyrin ring with a hydroxyethyl farnesyl side group. The chain is Protoheme IX farnesyltransferase from Xanthomonas campestris pv. campestris (strain 8004).